The chain runs to 570 residues: Capsid vertex component 2 (570 aa).

Residues 1-54 form an interaction with major capsid protein/MCP region; that stretch reads MALSGHVLIDPARLPRDTGPELMWAPSLRNSLRVSPEALELAEREAERARSERW. Residues 102 to 123 form a disordered region; sequence QVRSPSTGGRSAPAPPSPSPAQ.

It belongs to the herpesviridae CVC2 protein family. As to quaternary structure, heterodimerizes with CVC1. Interacts with major capsid protein/MCP and triplex capsid protein 1/TRX1 at the pentamer vertices. Interacts with the large tegument protein/LTP.

The protein resides in the virion. Its subcellular location is the host nucleus. Its function is as follows. Capsid vertex-specific component that plays a role during viral DNA encapsidation, assuring correct genome cleavage and presumably stabilizing capsids that contain full-length viral genomes. Participates in the interaction between the capsid and the tegument through interaction with the large tegument protein/LTP. This chain is Capsid vertex component 2, found in Homo sapiens (Human).